A 2406-amino-acid chain; its full sequence is Highly reducing polyketide synthase dmxL2 (2406 aa).

In terms of domain architecture, Ketosynthase family 3 (KS3) spans 1–399 (MEAFWSASKK…GTNAHAVLDD (399 aa)). The active site involves Cys130. Cys130 acts as the For beta-ketoacyl synthase activity in catalysis. A disordered region spans residues 414–476 (GHASNGTNGT…GPTDGPTSRP (63 aa)). Polar residues predominate over residues 417-448 (SNGTNGTLTNGHILNGEHTSNGMNGTLTNGHA). Positions 574–911 (FVFTGQGAQW…LAGSLFTQGY (338 aa)) are malonyl-CoA:ACP transacylase (MAT) domain. Catalysis depends on Ser665, which acts as the For malonyltransferase activity. The N-terminal hotdog fold stretch occupies residues 962–1096 (PSLLGSPSPS…GLLVIEYEAA (135 aa)). The 317-residue stretch at 962 to 1278 (PSLLGSPSPS…CAEIAGASSN (317 aa)) folds into the PKS/mFAS DH domain. Positions 964–1273 (LLGSPSPSLA…IEGFLCAEIA (310 aa)) are dehydratase (DH) domain. Residue His994 is the Proton acceptor; for dehydratase activity of the active site. The tract at residues 1124–1278 (VHRLDPSGFY…CAEIAGASSN (155 aa)) is C-terminal hotdog fold. Catalysis depends on Asp1189, which acts as the Proton donor; for dehydratase activity. The tract at residues 1694–2006 (GMLGSVCLEP…TGKHLGKIAL (313 aa)) is enoylreductase (ER) domain. The segment at 2032–2210 (GVYLLVGGLG…TTVDLGIMRD (179 aa)) is ketoreductase (KR) domain. A Carrier domain is found at 2318–2395 (EASDSVLEAL…TFCNRIAAKS (78 aa)). Ser2355 is subject to O-(pantetheine 4'-phosphoryl)serine.

Its pathway is secondary metabolite biosynthesis. Its function is as follows. Highly reducing polyketide synthase; part of the gene cluster that mediates the biosynthesis of the dimeric xanthones cryptosporioptides. The pathway begins with the synthesis of atrochrysone thioester by the polyketide synthase dmx-nrPKS. The atrochrysone carboxyl ACP thioesterase dmxR1 then breaks the thioester bond and releases the atrochrysone carboxylic acid from dmx-nrPKS. Atrochrysone carboxylic acid is decarboxylated by the decarboxylase dmxR15, and oxidized by the anthrone oxygenase dmxR16 to yield emodin. Emodin is then reduced to emodin hydroquinone by the oxidoreductase dmxR7. A-ring reduction by the short chain dehydrogenase dmxR18, dehydration by the scytalone dehydratase-like protein dmxR17 and probable spontaneous re-oxidation, results in overall deoxygenation to chrysophanol. Baeyer-Villiger oxidation by the Baeyer-Villiger monooxygenase (BVMO) dmxR6 then yields monodictylactone in equilibrium with monodictyphenone. In the case of the cryptosporioptides biosynthesis, monodictylactone is reduced at C-12 to an alcohol (by the short chain dehydrogenases dmxR12 or dmxR8) and hydroxylated at C-5 by dmxR9, yielding the electron-rich aromatic which could eliminate H(2)O to form the ortho-quinonemethide, followed by tautomerisation to paraquinone and complete the formal reduction to produce the 10-methylgroup. Conjugate addition of C-4a-OH to the resulting paraquinone by the monooxygenase dmxR10 then gives cyclohexadienone, which is then reduced at C-5 by the short chain dehydrogenase dmxR3 to give the dihydroxanthone. The 6,7-epoxide in the cryptosporioptides could be introduced by the cytochrome P450 monooxygenase dmxL3. The highly reducing PKS dmxL2 manufactures butyrate, which is further carboxylated by dmxL1 to form ethylmalonate. It is not yet clear whether the carboxylation occurs while the butyrate is attached to the ACP of dmxL2, but this unusual fungal metabolite could then be esterified to O-5 by the O-acetyltransferase dmxR13. Finally, dimerization performed by dmxR5 gives the observed dimers cryptosporioptides A, B and C as the final products of the pathway. This is Highly reducing polyketide synthase dmxL2 from Cryptosporiopsis sp. (strain 8999).